The sequence spans 341 residues: Zinc transporter ZIP11 (341 aa).

7 helical membrane passes run 12-32 (LLGTFFTWGLTAAGAALVFVF), 44-64 (LGFAAGVMLAASYWSLLAPAV), 72-92 (GFGSLAFLPVAIGFTLGAAFV), 193-213 (IALLILAITIHNIPEGLAVGV), 262-284 (FWYGQLSGMVEPLAGVFGAFAVV), 289-306 (ILPYALAFAAGAMVYVIM), and 321-341 (LASWASILGFVVMMSLDVGLG).

Belongs to the ZIP transporter (TC 2.A.5) family.

The protein resides in the cell membrane. Its subcellular location is the nucleus. It is found in the cytoplasm. It localises to the golgi apparatus. It carries out the reaction Zn(2+)(in) = Zn(2+)(out). The enzyme catalyses Cu(2+)(in) = Cu(2+)(out). Its function is as follows. Zinc importer that regulates cytosolic zinc concentrations either via zinc influx from the extracellular compartment or efflux from intracellular organelles such as Golgi apparatus. May transport copper ions as well. The transport mechanism remains to be elucidated. This is Zinc transporter ZIP11 (SLC39A11) from Bos taurus (Bovine).